Reading from the N-terminus, the 754-residue chain is MTISPPEREAKVKVTVDTDPVPASFEKWGQPGHFSRTLAKGPKTTTWIWNLHADAHDFDSQTSDLEDVSRKIFSAHFGHLAVIFVWLSGMYFHGARFSNYEAWLTDPTAIKPSAQVVWPIVGQGILNADVGGGFHGIQITSGLFYLWRASGFTNSYQLYCTAIGGLVMAGLMLFAGWFHYHKKAPKLEWFQNVESMMNHHLAGLLGLGSLGWAGHQIHVSLPINKLLDAGVAAKDIPLPHEFILDSSKMAELYPSFAQGLTPFFTLNWGVYSDFLTFKGGLNPVTGGLWLSDTAHHHLAIAVLFIIAGHMYRTNWGIGHSMKEILDGHKGDPLLFGGEGHTGLYEVLTTSWHAQLAINLALLGSLSIIVAHHMYAMPPYPYQAIDYGTQLSLFTHHVWIGGFLIVGAGAHGAIFMVRDYDPAKNVNNALDRVIRSRDAIISHLNWVCIFLGFHSFGLYIHNDTMRALGRPQDMFSDTAIKLQPIFAQWVQNLHFLAPGGTAPYAGAPASYAFGGETVAIAGKVAIMPIALGTADFMVHHIHAFTIHVTVLILLKGVLYARNSRLIPDKSNLGFRFPCDGPGRGGTCQVSGWDHVFLGLFWMYNSLSIVIFHFSWKMQSDVWGTVAPDGTVSHVTGGNFAQSAITINGWLRDFLWAQAANVINSYGSALSAYGIMFLAGHFVFAFSLMFLFSGRGYWQELIESIVWAHNKLKVAPAIQPRALSIIQGRAVGVAHYLLGGIVTTWAFFLARSLSIG.

8 consecutive transmembrane segments (helical) span residues 72 to 95 (IFSA…FHGA), 158 to 181 (LYCT…FHYH), 197 to 221 (MNHH…HVSL), 293 to 311 (TAHH…GHMY), 351 to 374 (WHAQ…HHMY), 390 to 416 (LSLF…IFMV), 438 to 460 (AIIS…LYIH), and 535 to 553 (FMVH…LILL). Residues Cys577 and Cys586 each contribute to the [4Fe-4S] cluster site. Helical transmembrane passes span 593–614 (HVFL…HFSW) and 668–690 (LSAY…MFLF). His679 provides a ligand contact to chlorophyll a'. Met687 and Tyr695 together coordinate chlorophyll a. A phylloquinone-binding site is contributed by Trp696. Residues 728–748 (AVGVAHYLLGGIVTTWAFFLA) form a helical membrane-spanning segment.

It belongs to the PsaA/PsaB family. In terms of assembly, the PsaA/B heterodimer binds the P700 chlorophyll special pair and subsequent electron acceptors. PSI consists of a core antenna complex that captures photons, and an electron transfer chain that converts photonic excitation into a charge separation. The cyanobacterial PSI reaction center is composed of one copy each of PsaA,B,C,D,E,F,I,J,K,L,M and X, and forms trimeric complexes. Requires PSI electron transfer chain: 5 chlorophyll a, 1 chlorophyll a', 2 phylloquinones and 3 4Fe-4S clusters. PSI core antenna: 90 chlorophyll a, 22 carotenoids, 3 phospholipids and 1 galactolipid. P700 is a chlorophyll a/chlorophyll a' dimer, A0 is one or more chlorophyll a, A1 is one or both phylloquinones and FX is a shared 4Fe-4S iron-sulfur center. as cofactor.

It localises to the cellular thylakoid membrane. It carries out the reaction reduced [plastocyanin] + hnu + oxidized [2Fe-2S]-[ferredoxin] = oxidized [plastocyanin] + reduced [2Fe-2S]-[ferredoxin]. Functionally, psaA and PsaB bind P700, the primary electron donor of photosystem I (PSI), as well as the electron acceptors A0, A1 and FX. PSI is a plastocyanin/cytochrome c6-ferredoxin oxidoreductase, converting photonic excitation into a charge separation, which transfers an electron from the donor P700 chlorophyll pair to the spectroscopically characterized acceptors A0, A1, FX, FA and FB in turn. Oxidized P700 is reduced on the lumenal side of the thylakoid membrane by plastocyanin or cytochrome c6. This is Photosystem I P700 chlorophyll a apoprotein A1 from Rippkaea orientalis (strain PCC 8801 / RF-1) (Cyanothece sp. (strain PCC 8801)).